The following is a 227-amino-acid chain: DNA repair protein RecO (227 aa).

It belongs to the RecO family.

In terms of biological role, involved in DNA repair and RecF pathway recombination. In Pseudomonas putida (strain ATCC 700007 / DSM 6899 / JCM 31910 / BCRC 17059 / LMG 24140 / F1), this protein is DNA repair protein RecO.